The chain runs to 88 residues: Small ribosomal subunit protein uS15c (88 aa).

The protein belongs to the universal ribosomal protein uS15 family. In terms of assembly, part of the 30S ribosomal subunit.

The protein resides in the plastid. It localises to the chloroplast. This Aethionema cordifolium (Lebanon stonecress) protein is Small ribosomal subunit protein uS15c (rps15).